The following is a 402-amino-acid chain: 4-hydroxy-3-methylbut-2-enyl diphosphate reductase (402 aa).

Cys66 serves as a coordination point for [4Fe-4S] cluster. Residue His96 coordinates (2E)-4-hydroxy-3-methylbut-2-enyl diphosphate. His96 contacts dimethylallyl diphosphate. His96 provides a ligand contact to isopentenyl diphosphate. Cys157 lines the [4Fe-4S] cluster pocket. His185 lines the (2E)-4-hydroxy-3-methylbut-2-enyl diphosphate pocket. His185 lines the dimethylallyl diphosphate pocket. Isopentenyl diphosphate is bound at residue His185. The Proton donor role is filled by Glu187. A (2E)-4-hydroxy-3-methylbut-2-enyl diphosphate-binding site is contributed by Thr250. Cys288 serves as a coordination point for [4Fe-4S] cluster. (2E)-4-hydroxy-3-methylbut-2-enyl diphosphate is bound by residues Ser317, Ser318, Asn319, and Ser379. The dimethylallyl diphosphate site is built by Ser317, Ser318, Asn319, and Ser379. Isopentenyl diphosphate-binding residues include Ser317, Ser318, Asn319, and Ser379.

Belongs to the IspH family. The cofactor is [4Fe-4S] cluster.

It carries out the reaction isopentenyl diphosphate + 2 oxidized [2Fe-2S]-[ferredoxin] + H2O = (2E)-4-hydroxy-3-methylbut-2-enyl diphosphate + 2 reduced [2Fe-2S]-[ferredoxin] + 2 H(+). The enzyme catalyses dimethylallyl diphosphate + 2 oxidized [2Fe-2S]-[ferredoxin] + H2O = (2E)-4-hydroxy-3-methylbut-2-enyl diphosphate + 2 reduced [2Fe-2S]-[ferredoxin] + 2 H(+). It functions in the pathway isoprenoid biosynthesis; dimethylallyl diphosphate biosynthesis; dimethylallyl diphosphate from (2E)-4-hydroxy-3-methylbutenyl diphosphate: step 1/1. It participates in isoprenoid biosynthesis; isopentenyl diphosphate biosynthesis via DXP pathway; isopentenyl diphosphate from 1-deoxy-D-xylulose 5-phosphate: step 6/6. In terms of biological role, catalyzes the conversion of 1-hydroxy-2-methyl-2-(E)-butenyl 4-diphosphate (HMBPP) into a mixture of isopentenyl diphosphate (IPP) and dimethylallyl diphosphate (DMAPP). Acts in the terminal step of the DOXP/MEP pathway for isoprenoid precursor biosynthesis. In Trichormus variabilis (strain ATCC 29413 / PCC 7937) (Anabaena variabilis), this protein is 4-hydroxy-3-methylbut-2-enyl diphosphate reductase.